The chain runs to 219 residues: Ras-related protein Rab-3 (219 aa).

Residues 29-37 (GNSSVGKTS), 48-54 (TSAFVST), 77-81 (DTAGQ), 135-138 (NKCD), and 165-167 (SAK) each bind GTP. The Effector region signature appears at 51 to 59 (FVSTVGIDF). Positions 191-219 (LDKDPQQQPKGQKLEANPTQKPAQQQCNC) are disordered. The segment covering 207–219 (NPTQKPAQQQCNC) has biased composition (polar residues). Residues Cys-217 and Cys-219 are each lipidated (S-geranylgeranyl cysteine). Position 219 is a cysteine methyl ester (Cys-219).

This sequence belongs to the small GTPase superfamily. Rab family.

The protein resides in the cell membrane. Involved in exocytosis by regulating a late step in synaptic vesicle fusion. Could play a role in neurotransmitter release by regulating membrane flow in the nerve terminal. Plays a role in the recruitment of endophilin unc-57 to synaptic vesicles. Probably by controlling dense-core vesicle trafficking, plays a role in the AVG neuron-mediated formation of the right axon tract of the ventral nerve cord. In Caenorhabditis elegans, this protein is Ras-related protein Rab-3 (rab-3).